Here is a 341-residue protein sequence, read N- to C-terminus: RNA 3'-terminal phosphate cyclase (341 aa).

ATP is bound by residues Gln102 and 283–287; that span reads HLADQ. The active-site Tele-AMP-histidine intermediate is His308.

Belongs to the RNA 3'-terminal cyclase family. Type 1 subfamily.

Its subcellular location is the cytoplasm. The enzyme catalyses a 3'-end 3'-phospho-ribonucleotide-RNA + ATP = a 3'-end 2',3'-cyclophospho-ribonucleotide-RNA + AMP + diphosphate. In terms of biological role, catalyzes the conversion of 3'-phosphate to a 2',3'-cyclic phosphodiester at the end of RNA. The mechanism of action of the enzyme occurs in 3 steps: (A) adenylation of the enzyme by ATP; (B) transfer of adenylate to an RNA-N3'P to produce RNA-N3'PP5'A; (C) and attack of the adjacent 2'-hydroxyl on the 3'-phosphorus in the diester linkage to produce the cyclic end product. The biological role of this enzyme is unknown but it is likely to function in some aspects of cellular RNA processing. This is RNA 3'-terminal phosphate cyclase from Ectopseudomonas mendocina (strain ymp) (Pseudomonas mendocina).